The chain runs to 101 residues: NAD(P)H-quinone oxidoreductase subunit 4L, chloroplastic (101 aa).

Helical transmembrane passes span 2-22, 32-52, and 61-81; these read MLEHVLFLSAYLFSIGIFGLI, MCLELILNAVNLNLVTFSHLF, and IFSIFVITIAAAEAAIGLAIV.

The protein belongs to the complex I subunit 4L family. NDH is composed of at least 16 different subunits, 5 of which are encoded in the nucleus.

Its subcellular location is the plastid. The protein localises to the chloroplast thylakoid membrane. It carries out the reaction a plastoquinone + NADH + (n+1) H(+)(in) = a plastoquinol + NAD(+) + n H(+)(out). The enzyme catalyses a plastoquinone + NADPH + (n+1) H(+)(in) = a plastoquinol + NADP(+) + n H(+)(out). Its function is as follows. NDH shuttles electrons from NAD(P)H:plastoquinone, via FMN and iron-sulfur (Fe-S) centers, to quinones in the photosynthetic chain and possibly in a chloroplast respiratory chain. The immediate electron acceptor for the enzyme in this species is believed to be plastoquinone. Couples the redox reaction to proton translocation, and thus conserves the redox energy in a proton gradient. The chain is NAD(P)H-quinone oxidoreductase subunit 4L, chloroplastic from Piper cenocladum (Ant piper).